The primary structure comprises 865 residues: MITTKELRNKFINYFESKNHSHQPSSSLIPFGDDTLLFTNAGMVQFKDVFLGIEKKDFSRAVTVQKCLRAGGKHNDLDNVGYTARHHTFFEMLGNFSFGDYFKKDAISFAWEFLTKEIKLPIEKLWVTIYASDDEAFDVWHKHIGLAKERIIRIDSSDNFWSMGDTGPCGPCTEIFYDHGEDVAGGLPGTPEQDGDRYIEIWNIVFMQYNRHADGSTTDLPKPSVDTGMGLERISAVLQNVHSNYEIDLFQALIKKAQQVTHAKDINSPSLKVIADHIRACAFLIADGVLPANEGRGYVLRRIIRRAIRHGNKVGAKEIFFYKLVAELVNQMGEAYSQLIDKRELIEKTLIKEEELFLKTIENGIKIFDAEIENLKDNTISGEVAFKLYDTYGFPFDLTADMAREKGLKVDEQAFLAQMQIQKQRSKEAGKFNVDYNSLINSQVKSEFRGYSTLIEDAKVLEIYQDGQLVASTSEQVPAVVVLDKTPFYAESGGQVGDKGILEGVGFEFVVEDVQKSGEAILHIGKLVKGRLNLNDELTARVSDQPRLATAANHSATHLLHKALKLVLGGHAEQKGSLVDENRLRFDFTHDKAISRSEIEQIELLVNQQIRANYPVTTIETSQQKAKSLGAEALFGEKYGDIVRVISMGDFSIELCGGTHVAYTGDIGLFKIISEGGIASGVRRIEAVTADKAIRHTFTNENKIIAIKDSLKANDANLIDKIKSMLEQIKNQEKQIAKLKKELLSGSSNDIKETNIGDIKVVVANVDGVDVKTLRDKIDDYKSKNTKVIAVLTTTNADKVQFVIGVSNAITTLIKAGDIAKELSSHIDGKGGGRADMAQGGGNNSANIDQALSQVEKFILNNIKE.

His-554, His-558, Cys-656, and His-660 together coordinate Zn(2+).

Belongs to the class-II aminoacyl-tRNA synthetase family. Zn(2+) is required as a cofactor.

Its subcellular location is the cytoplasm. The catalysed reaction is tRNA(Ala) + L-alanine + ATP = L-alanyl-tRNA(Ala) + AMP + diphosphate. Functionally, catalyzes the attachment of alanine to tRNA(Ala) in a two-step reaction: alanine is first activated by ATP to form Ala-AMP and then transferred to the acceptor end of tRNA(Ala). Also edits incorrectly charged Ser-tRNA(Ala) and Gly-tRNA(Ala) via its editing domain. The sequence is that of Alanine--tRNA ligase from Francisella tularensis subsp. novicida (strain U112).